The sequence spans 516 residues: Golgi-associated kinase 1B (516 aa).

Topologically, residues 1-37 (MTCPDKLGQLINWFVCSLCAPRVCKLWSSRRPRTRRN) are cytoplasmic. The helical; Signal-anchor for type II membrane protein transmembrane segment at 38–55 (LLLGTACAIYLGFLVSQV) threads the bilayer. The Extracellular segment spans residues 56-516 (GKGSFQHGQA…HGARVLPMNE (461 aa)). N-linked (GlcNAc...) asparagine glycosylation is present at asparagine 286.

Belongs to the GASK family.

Its subcellular location is the golgi apparatus membrane. This chain is Golgi-associated kinase 1B, found in Rattus norvegicus (Rat).